We begin with the raw amino-acid sequence, 201 residues long: 3-isopropylmalate dehydratase small subunit (201 aa).

Belongs to the LeuD family. LeuD type 1 subfamily. Heterodimer of LeuC and LeuD.

The enzyme catalyses (2R,3S)-3-isopropylmalate = (2S)-2-isopropylmalate. It functions in the pathway amino-acid biosynthesis; L-leucine biosynthesis; L-leucine from 3-methyl-2-oxobutanoate: step 2/4. Its function is as follows. Catalyzes the isomerization between 2-isopropylmalate and 3-isopropylmalate, via the formation of 2-isopropylmaleate. The polypeptide is 3-isopropylmalate dehydratase small subunit (Shewanella denitrificans (strain OS217 / ATCC BAA-1090 / DSM 15013)).